The sequence spans 639 residues: MTETKRYALLEAADHPAALRNLPEDRLPELAEELRGYLLESVSRSGGHLAAGLGTVELTIALHYVFNTPEDKLVWDVGHQAYPHKILTGRRARLPTIRKKGGLSAFPNRAESPYDCFGVGHSSTSISAALGMAVAAALERRPIHAVAIIGDGGLTGGMAFEALNHAGTLDANLLIILNDNEMSISPNVGALNNYLAKILSGKFYSSVRESGKHLLGRHMPGVWELARRAEEHVKGMVAPGTLFEELGFNYFGPIDGHDLDTLITTLRNLRDQKGPRFLHVVTRKGKGYAPAEKDPVAYHGVGAFDLDADELPKSKPGTPSYTEVFGQWLCDMAARDRRLLGITPAMREGSGLVEFSQRFPDRYFDVGIAEQHAVTFAAGQASEGYKPVVAIYSTFLQRAYDQLIHDVALQNLPVLFAIDRAGLVGPDGPTHAGSFDLSFMRCIPNMLIMAPSDENECRQMLYTGFIHDGPAAVRYPRGRGPGVRPEETMTAFPVGKGEVRLRGKGTAILAFGTPLAAALAVGERIGATVANMRFVKPLDEALILELAATHDRIVTVEENAIAGGAGSAVGEFLAAQHCGIPVCHIGLKDEFLDQGTREELLAIAGLDQAGIARSIDAFIQATAAADKPRRARGQAKDKH.

Thiamine diphosphate-binding positions include His-79 and 120–122; that span reads GHS. Asp-151 serves as a coordination point for Mg(2+). Thiamine diphosphate contacts are provided by residues 152–153, Asn-180, Tyr-288, and Glu-370; that span reads GG. Asn-180 is a binding site for Mg(2+).

This sequence belongs to the transketolase family. DXPS subfamily. As to quaternary structure, homodimer. Requires Mg(2+) as cofactor. It depends on thiamine diphosphate as a cofactor.

The enzyme catalyses D-glyceraldehyde 3-phosphate + pyruvate + H(+) = 1-deoxy-D-xylulose 5-phosphate + CO2. It participates in metabolic intermediate biosynthesis; 1-deoxy-D-xylulose 5-phosphate biosynthesis; 1-deoxy-D-xylulose 5-phosphate from D-glyceraldehyde 3-phosphate and pyruvate: step 1/1. Its function is as follows. Catalyzes the acyloin condensation reaction between C atoms 2 and 3 of pyruvate and glyceraldehyde 3-phosphate to yield 1-deoxy-D-xylulose-5-phosphate (DXP). The protein is 1-deoxy-D-xylulose-5-phosphate synthase of Methylococcus capsulatus (strain ATCC 33009 / NCIMB 11132 / Bath).